The chain runs to 435 residues: MSKSSTCPITIKSINGRFQTTFGTIKQFNKMVELIDTNNTINLDMDSDRIEKILNYLRGYNCSLKLIAYDANKLGLDISYDGYVYINVGGRVYYVDKDFIKSKLEFFKIFFKYNNHCHPDYSGIVIDRDYRVFEKVLRHIKGKQNDNHNLSTELDYYGLNKPIHIIEPSYFNHYSMKKNMYVKIPSTIDDKNFYCKDDIETMIYLSYKYISLIVIFFEKEIPEDISGLQFYRFVGHGFGEYDKKSCGLKSISKSQNMILIHSIPYSTEHIKNNKNTKESYYHRPLELHVNKNLNIREVVFLEKMSIDKQPDNVTCIKDYFLFKKNFGSEGGLTDFVSFNLSEFLFVDYPQCAIKKMYLKSNSKISHVEIKCNNNLVLNSPVNYIGTKDIYRITFLTVSKSRLNLLIDNRTDLNFTVYFHRKCVDQLIFGYKILRL.

Positions 80–149 (YDGYVYINVG…IKGKQNDNHN (70 aa)) constitute a BTB domain.

The protein belongs to the mimivirus BTB/WD family.

This Acanthamoeba polyphaga mimivirus (APMV) protein is Putative BTB/POZ domain-containing protein L275.